The primary structure comprises 377 residues: Chaperone protein DnaJ (377 aa).

One can recognise a J domain in the interval 5 to 70 (DYYEVLGVGK…EKKAAYDQYG (66 aa)). A CR-type zinc finger spans residues 137–215 (GHEAQIRVPH…CHGQGKLKSQ (79 aa)). Residues C150, C153, C167, C170, C189, C192, C203, and C206 each coordinate Zn(2+). CXXCXGXG motif repeat units lie at residues 150–157 (CDHCHGNG), 167–174 (CPTCHGAG), 189–196 (CPKCHGSG), and 203–210 (CTKCHGQG).

The protein belongs to the DnaJ family. In terms of assembly, homodimer. Zn(2+) serves as cofactor.

The protein localises to the cytoplasm. Participates actively in the response to hyperosmotic and heat shock by preventing the aggregation of stress-denatured proteins and by disaggregating proteins, also in an autonomous, DnaK-independent fashion. Unfolded proteins bind initially to DnaJ; upon interaction with the DnaJ-bound protein, DnaK hydrolyzes its bound ATP, resulting in the formation of a stable complex. GrpE releases ADP from DnaK; ATP binding to DnaK triggers the release of the substrate protein, thus completing the reaction cycle. Several rounds of ATP-dependent interactions between DnaJ, DnaK and GrpE are required for fully efficient folding. Also involved, together with DnaK and GrpE, in the DNA replication of plasmids through activation of initiation proteins. This chain is Chaperone protein DnaJ, found in Cupriavidus taiwanensis (strain DSM 17343 / BCRC 17206 / CCUG 44338 / CIP 107171 / LMG 19424 / R1) (Ralstonia taiwanensis (strain LMG 19424)).